The following is a 726-amino-acid chain: NHL repeat-containing protein 2 (726 aa).

The Thioredoxin domain occupies 43–200 (QKVDGWEQDL…TSIALKYYKD (158 aa)). 6 NHL repeats span residues 212–254 (KLYK…VWKN), 265–307 (NPGR…IDLE), 335–369 (ISSP…IWAL), 409–439 (FAQP…VRTV), 461–505 (AFGD…VDPK), and 518–562 (TNNV…MDLE).

Monomer. In terms of tissue distribution, ubiquitous. Detected in heart, kidney, muscle, brain, lung, liver and in skin fibroblasts (at protein level).

The protein localises to the cytoplasm. It is found in the cytosol. Functionally, required for normal embryonic development. This chain is NHL repeat-containing protein 2 (NHLRC2), found in Homo sapiens (Human).